The chain runs to 514 residues: Peptide chain release factor 3 (514 aa).

One can recognise a tr-type G domain in the interval 8–268 (KKRRTFAIIS…IFLKFAPEPH (261 aa)). Residues 17–24 (SHPDAGKT), 85–89 (DTPGH), and 139–142 (NKLD) contribute to the GTP site.

Belongs to the TRAFAC class translation factor GTPase superfamily. Classic translation factor GTPase family. PrfC subfamily.

It is found in the cytoplasm. Increases the formation of ribosomal termination complexes and stimulates activities of RF-1 and RF-2. It binds guanine nucleotides and has strong preference for UGA stop codons. It may interact directly with the ribosome. The stimulation of RF-1 and RF-2 is significantly reduced by GTP and GDP, but not by GMP. The chain is Peptide chain release factor 3 from Streptococcus pneumoniae serotype 2 (strain D39 / NCTC 7466).